We begin with the raw amino-acid sequence, 545 residues long: Glucose-6-phosphate isomerase (545 aa).

E351 serves as the catalytic Proton donor. Catalysis depends on residues H382 and K510.

This sequence belongs to the GPI family.

It is found in the cytoplasm. It catalyses the reaction alpha-D-glucose 6-phosphate = beta-D-fructose 6-phosphate. It participates in carbohydrate biosynthesis; gluconeogenesis. It functions in the pathway carbohydrate degradation; glycolysis; D-glyceraldehyde 3-phosphate and glycerone phosphate from D-glucose: step 2/4. Catalyzes the reversible isomerization of glucose-6-phosphate to fructose-6-phosphate. This is Glucose-6-phosphate isomerase from Helicobacter pylori (strain Shi470).